Reading from the N-terminus, the 83-residue chain is Retinal cone rhodopsin-sensitive cGMP 3',5'-cyclic phosphodiesterase subunit gamma (83 aa).

Positions 1-19 (MSDNTTLAPPAASQAPATP) are enriched in low complexity. The segment at 1 to 51 (MSDNTTLAPPAASQAPATPRKGPPKFKQRQTRQFKSKPPKKGVKGFGDDIP) is disordered. Basic residues predominate over residues 22-43 (GPPKFKQRQTRQFKSKPPKKGV).

The protein belongs to the rod/cone cGMP-PDE gamma subunit family. As to quaternary structure, tetramer composed of two catalytic chains (alpha and beta), and two inhibitory chains (gamma).

The enzyme catalyses 3',5'-cyclic GMP + H2O = GMP + H(+). In terms of biological role, participates in processes of transmission and amplification of the visual signal. cGMP-PDEs are the effector molecules in G-protein-mediated phototransduction in vertebrate rods and cones. The protein is Retinal cone rhodopsin-sensitive cGMP 3',5'-cyclic phosphodiesterase subunit gamma (PDE6H) of Ictidomys tridecemlineatus (Thirteen-lined ground squirrel).